Consider the following 514-residue polypeptide: Putative ribose/galactose/methyl galactoside import ATP-binding protein 3 (514 aa).

ABC transporter domains lie at 21–256 (LRLD…VGRT) and 267–512 (VPTD…SGRS). 53–60 (GENGAGKS) contacts ATP.

Belongs to the ABC transporter superfamily. Carbohydrate importer 2 (CUT2) (TC 3.A.1.2) family.

It localises to the cell inner membrane. It catalyses the reaction D-ribose(out) + ATP + H2O = D-ribose(in) + ADP + phosphate + H(+). It carries out the reaction D-galactose(out) + ATP + H2O = D-galactose(in) + ADP + phosphate + H(+). In terms of biological role, part of an ABC transporter complex involved in carbohydrate import. Could be involved in ribose, galactose and/or methyl galactoside import. Responsible for energy coupling to the transport system. This is Putative ribose/galactose/methyl galactoside import ATP-binding protein 3 from Burkholderia cenocepacia (strain HI2424).